The sequence spans 347 residues: FK506-binding protein-like (347 aa).

The segment at 1–36 (METSLISPMKENNTAQPQQREENTQQNLNAAVPIKQ) is disordered. Position 3 is a phosphothreonine (threonine 3). TPR repeat units follow at residues 208–241 (AKEEHRRGTELFRAGNPQGAARCYGRALRLLLTL), 250–283 (TILHANLAACQLLLGHPQLAAQSCDRVLEREPGH), and 284–317 (LKALYRRGVAQAALGDLDKATADLKKVLAVDPKN).

Forms a ternary complex with CDKN1A/p21 and HSP90AB1/Hsp90.

In terms of biological role, may be involved in response to X-ray. Regulates p21 protein stability by binding to Hsp90 and p21. The protein is FK506-binding protein-like (Fkbpl) of Rattus norvegicus (Rat).